Reading from the N-terminus, the 1033-residue chain is Tyrosine-protein kinase-like otk (1033 aa).

The N-terminal stretch at 1–22 is a signal peptide; that stretch reads MTARMISIYGLVLASMMASVWA. At 23 to 581 the chain is on the extracellular side; sequence SSSRFQRLPQ…GGDGFLVTRA (559 aa). Ig-like C2-type domains follow at residues 25–108, 109–199, 251–365, 368–463, and 468–558; these read SRFQ…REAS, PPAK…RVMS, PEDL…LPIS, PGVL…VAIN, and PKFS…VQLV. N-linked (GlcNAc...) asparagine glycosylation is present at N39. Intrachain disulfides connect C46/C95, C137/C188, C276/C354, and C399/C447. N-linked (GlcNAc...) asparagine glycans are attached at residues N336, N417, N429, N444, N457, N512, and N524. A disulfide bridge connects residues C490 and C542. A helical transmembrane segment spans residues 582–602; the sequence is VLITMTVALAYIVLVVGLMLW. The Cytoplasmic portion of the chain corresponds to 603–1033; sequence CRYRRQARKA…LSKAMQSVEK (431 aa). 2 disordered regions span residues 617–679 and 718–760; these read LSTK…KKSA and SPTD…KTSM. Residues 655-673 are compositionally biased toward polar residues; the sequence is KSSGDAQKSDDTACSQQSR. Phosphoserine is present on S678. The Protein kinase; inactive domain occupies 692–1028; it reads LSELIQIGRG…QLGAALSKAM (337 aa). The span at 720–731 shows a compositional bias: basic and acidic residues; it reads TDKDADTEKQHS.

It belongs to the protein kinase superfamily. Tyr protein kinase family. Insulin receptor subfamily. As to quaternary structure, interacts with plexA; component of a receptor complex that mediates the repulsive signaling in response to Semaphorin ligands.

It is found in the cell membrane. In terms of biological role, acts as a calcium-dependent, homophilic cell adhesion molecule that regulates neural recognition during the development of the nervous system. Component of the repulsive Plexin signaling response to regulate motor axon guidance at the embryonic stage. Also component of a receptor complex that is required in the adult visual system to innervate the lamina layer; specific targeting of R1-R6 axons. In Drosophila erecta (Fruit fly), this protein is Tyrosine-protein kinase-like otk.